We begin with the raw amino-acid sequence, 248 residues long: MRLAIHGYGATGHYVHELAPDAVVAVIDKTKTAEQVPSYGTLAEMTESVDAIIDFSHPSLLPDLLAYGIKTKTPLVIATTGFSEAELQTIRDASTQIPIFQSYNMSFGIAMMQQLLKTLVPLAGAFDIELLEKHHNQKVDAPSGTAELLLRTIQDLRDVQPVYERESTREKREPNEIGMHSMRGGTIFGEHEVLFAGVDELIEIKHTALSKKVFASGAIKAAEALIQKSAGLYTLETLYTQEDSHVIN.

Position 28 (Asp-28) interacts with NAD(+). Lys-29 contributes to the NADP(+) binding site. Residues 78-80 (ATT) and 102-105 (SYNM) contribute to the NAD(+) site. Residue His-134 is the Proton donor/acceptor of the active site. (S)-2,3,4,5-tetrahydrodipicolinate is bound at residue His-135. Residue Lys-138 is the Proton donor of the active site. A (S)-2,3,4,5-tetrahydrodipicolinate-binding site is contributed by 144-145 (GT).

It belongs to the DapB family.

It localises to the cytoplasm. It carries out the reaction (S)-2,3,4,5-tetrahydrodipicolinate + NAD(+) + H2O = (2S,4S)-4-hydroxy-2,3,4,5-tetrahydrodipicolinate + NADH + H(+). The catalysed reaction is (S)-2,3,4,5-tetrahydrodipicolinate + NADP(+) + H2O = (2S,4S)-4-hydroxy-2,3,4,5-tetrahydrodipicolinate + NADPH + H(+). Its pathway is amino-acid biosynthesis; L-lysine biosynthesis via DAP pathway; (S)-tetrahydrodipicolinate from L-aspartate: step 4/4. Its function is as follows. Catalyzes the conversion of 4-hydroxy-tetrahydrodipicolinate (HTPA) to tetrahydrodipicolinate. The sequence is that of 4-hydroxy-tetrahydrodipicolinate reductase from Exiguobacterium sibiricum (strain DSM 17290 / CCUG 55495 / CIP 109462 / JCM 13490 / 255-15).